The following is a 122-amino-acid chain: Large ribosomal subunit protein uL18 (122 aa).

The protein belongs to the universal ribosomal protein uL18 family. In terms of assembly, part of the 50S ribosomal subunit; part of the 5S rRNA/L5/L18/L25 subcomplex. Contacts the 5S and 23S rRNAs.

Its function is as follows. This is one of the proteins that bind and probably mediate the attachment of the 5S RNA into the large ribosomal subunit, where it forms part of the central protuberance. This Mycobacterium ulcerans (strain Agy99) protein is Large ribosomal subunit protein uL18.